We begin with the raw amino-acid sequence, 263 residues long: MDVMNAFDSQAEDSPTSLGRSLRRRPLARKKLSEMVEEELEQMIRRHEFGEGEQLPSERELMAFFNVGRPSVREALAALKRKGLVQINNGERARVSRPSADTIISELSGMAKDFLTHPGGIAHFEQLRLFFESSLVRYAAEHATDEQIALLTKALEINSQSLDDNALFIRSDVEFHRVLAEIPGNPIFMAIHVALLDWLIAARPSVPDRELHEHNNVSYQQHIVIVDAIRQRDPDKADRALQTHLNSVSATWHALGKKSQKMR.

A disordered region spans residues 1 to 25 (MDVMNAFDSQAEDSPTSLGRSLRRR). Residues 30-98 (KKLSEMVEEE…NGERARVSRP (69 aa)) form the HTH gntR-type domain. The segment at residues 58–77 (ERELMAFFNVGRPSVREALA) is a DNA-binding region (H-T-H motif).

The protein belongs to the NanR family.

In terms of biological role, transcriptional repressor that controls expression of the genes required for the catabolism of sialic acids. The sequence is that of HTH-type transcriptional repressor NanR from Salmonella choleraesuis (strain SC-B67).